Reading from the N-terminus, the 1398-residue chain is MAP-homologous protein 1 (1398 aa).

Met-1 carries the N-acetylmethionine modification. The disordered stretch occupies residues 21–77 (GWLVRPSASTSKSSRPGKSESKANSVAPDIQMDTARPPVFETSVDSSSSILSSNDKG). A compositionally biased stretch (polar residues) spans 27–36 (SASTSKSSRP). The span at 63 to 73 (SVDSSSSILSS) shows a compositional bias: low complexity. A Phosphoserine modification is found at Ser-81. Disordered stretches follow at residues 90 to 144 (NQRA…APAP), 156 to 186 (HRKKDQEQQEKERERKERSPSPTHVDRGAAI), and 191 to 210 (TATISAESPPPLQYNAPPSY). 2 stretches are compositionally biased toward polar residues: residues 91 to 102 (QRANAGSTSVPT) and 114 to 123 (VVETNLSNVE). Residues 159-186 (KDQEQQEKERERKERSPSPTHVDRGAAI) are compositionally biased toward basic and acidic residues. Lys-221 is covalently cross-linked (Glycyl lysine isopeptide (Lys-Gly) (interchain with G-Cter in ubiquitin)). Thr-222 carries the phosphothreonine modification. 4 disordered regions span residues 244–270 (HSPEEGKVDGTSPADDHNYGGSRPDPR), 296–382 (SSAS…PSSH), 395–428 (GNNNNNSTNASSLSANVNNPDTSSTSLWSSSSME), and 515–548 (NPEEDDANAKSKEEMAPQKQNEVEAHDEEDNNSQ). 4 positions are modified to phosphoserine: Ser-309, Ser-311, Ser-354, and Ser-357. Residues 357–371 (SIVDTVDSNSDVSSS) show a composition bias toward low complexity. A compositionally biased stretch (polar residues) spans 372–381 (AQNNNQTPSS). The segment covering 396–426 (NNNNNSTNASSLSANVNNPDTSSTSLWSSSS) has biased composition (low complexity). Residues 521-538 (ANAKSKEEMAPQKQNEVE) show a composition bias toward basic and acidic residues. Phosphothreonine is present on Thr-577. Positions 605-615 (STSSLASMVSS) are enriched in low complexity. 3 disordered regions span residues 605–630 (STSSLASMVSSDTNGTNADDEGEILP), 1148–1169 (LKSPEAVSKSRKGGNQAQPNSE), and 1203–1223 (DAEDAVEFREGDDSNVNHEDV). The span at 1160-1169 (GGNQAQPNSE) shows a compositional bias: polar residues. Residues 1208-1223 (VEFREGDDSNVNHEDV) show a composition bias toward basic and acidic residues. Residues 1227-1258 (DQQFRDEVDIKNKYSIIKRELEHEKLVGGGDL) form a tau/MAP repeat-like region. The disordered stretch occupies residues 1313-1372 (QEETAFRTKDEQQSSQSNDSSANASPTTDPISTGSNTSRTNDNAHIPPTDAPGFDKFMNN). Positions 1325–1337 (QSSQSNDSSANAS) are enriched in low complexity. The span at 1338–1355 (PTTDPISTGSNTSRTNDN) shows a compositional bias: polar residues.

It is found in the cytoplasm. The protein localises to the cytoskeleton. Its subcellular location is the spindle. Functionally, essential for the formation and/or stabilization of microtubules. Binds to microtubules in vitro. The chain is MAP-homologous protein 1 (MHP1) from Saccharomyces cerevisiae (strain ATCC 204508 / S288c) (Baker's yeast).